The sequence spans 569 residues: Protein GPR108 (569 aa).

The signal sequence occupies residues methionine 1–glycine 34. Asparagine 59, asparagine 111, and asparagine 182 each carry an N-linked (GlcNAc...) asparagine glycan. Residues leucine 144–valine 219 form a disordered region. Over residues lysine 180 to lysine 192 the composition is skewed to polar residues. The span at threonine 194–glutamate 203 shows a compositional bias: basic and acidic residues. N-linked (GlcNAc...) asparagine glycans are attached at residues asparagine 226 and asparagine 230. The next 7 membrane-spanning stretches (helical) occupy residues leucine 289–cysteine 309, isoleucine 318–isoleucine 338, leucine 362–valine 382, isoleucine 393–serine 413, isoleucine 427–isoleucine 447, valine 475–valine 495, and tryptophan 499–glycine 519.

The protein belongs to the LU7TM family. In terms of tissue distribution, high expression in spleen, lung, stomach, large and small intestine, and thymus.

The protein resides in the golgi apparatus. Its subcellular location is the cis-Golgi network membrane. It is found in the trans-Golgi network membrane. The protein localises to the golgi apparatus membrane. Its function is as follows. May play a role in intracellular immune modulation by activating NF-kappaB response and attenuating Toll-like-receptor response. Functionally, (Microbial infection) Plays an essential function in adeno-associated virus (AAV) transduction, across multiple serotypes except AAV5. May play a critical role in mediating the endosomal virus escape or in the AAV virions trafficking from endosomes to the nucleus. The chain is Protein GPR108 (Gpr108) from Mus musculus (Mouse).